The primary structure comprises 427 residues: Transcobalamin-2 (427 aa).

The signal sequence occupies residues 1 to 18; sequence MRHLGAFLFLLGVLGALT. Cystine bridges form between Cys21–Cys267, Cys83–Cys96, Cys116–Cys309, and Cys165–Cys205. Residues Gln104, 152 to 156, His190, 190 to 194, Asn242, Ser245, Gln291, and 395 to 397 contribute to the cob(II)alamin site; these read TSYYQ, HHSVD, and WQL.

It belongs to the eukaryotic cobalamin transport proteins family. As to quaternary structure, interacts with CD320 (via LDL-receptor class A domains).

It is found in the secreted. In terms of biological role, primary vitamin B12-binding and transport protein. Delivers cobalamin to cells. This is Transcobalamin-2 (TCN2) from Homo sapiens (Human).